A 113-amino-acid polypeptide reads, in one-letter code: Large ribosomal subunit protein bL19 (113 aa).

This sequence belongs to the bacterial ribosomal protein bL19 family.

Its function is as follows. This protein is located at the 30S-50S ribosomal subunit interface and may play a role in the structure and function of the aminoacyl-tRNA binding site. This Mycobacterium leprae (strain Br4923) protein is Large ribosomal subunit protein bL19.